We begin with the raw amino-acid sequence, 106 residues long: MNKLHIKKGDTVYVNAGDYKGKIGCVLKVFLGKQRALVEGVNIISKTIKPSAKNPQGGFEKKEASIHISNLNVLDPKTGKPVRIGRKLGERGMLIRFSKKSGDEIK.

It belongs to the universal ribosomal protein uL24 family. As to quaternary structure, part of the 50S ribosomal subunit.

One of two assembly initiator proteins, it binds directly to the 5'-end of the 23S rRNA, where it nucleates assembly of the 50S subunit. Its function is as follows. One of the proteins that surrounds the polypeptide exit tunnel on the outside of the subunit. The protein is Large ribosomal subunit protein uL24 of Azobacteroides pseudotrichonymphae genomovar. CFP2.